A 354-amino-acid chain; its full sequence is Galactoside alpha-(1,2)-fucosyltransferase 2 (354 aa).

Over 1–5 the chain is Cytoplasmic; that stretch reads MASAQ. A helical; Signal-anchor for type II membrane protein transmembrane segment spans residues 6–26; sequence VPFSFPLAHFLIFVFVTSTIT. Residues 27-354 are Lumenal-facing; sequence HLQQRIVKLQ…PADLSPLLKH (328 aa). Residues 43–68 form a disordered region; that stretch reads LPMTTQMSSGNTESPEMRRDSEQHGN. The segment covering 45–56 has biased composition (polar residues); it reads MTTQMSSGNTES. Residues 57–68 show a composition bias toward basic and acidic residues; it reads PEMRRDSEQHGN. N-linked (GlcNAc...) asparagine glycosylation occurs at Asn-199.

This sequence belongs to the glycosyltransferase 11 family. In terms of tissue distribution, specifically expressed in gut.

Its subcellular location is the golgi apparatus. It localises to the golgi stack membrane. It carries out the reaction a beta-D-galactosyl-(1-&gt;3)-N-acetyl-beta-D-glucosaminyl derivative + GDP-beta-L-fucose = an alpha-L-Fuc-(1-&gt;2)-beta-D-Gal-(1-&gt;3)-beta-D-GlcNAc derivative + GDP + H(+). It catalyses the reaction a beta-D-galactosyl-(1-&gt;4)-N-acetyl-beta-D-glucosaminyl derivative + GDP-beta-L-fucose = an alpha-L-Fuc-(1-&gt;2)-beta-D-Gal-(1-&gt;4)-beta-D-GlcNAc derivative + GDP + H(+). The catalysed reaction is a ganglioside GM1 (d18:1(4E)) + GDP-beta-L-fucose = a ganglioside Fuc-GM1 (d18:1(4E)) + GDP + H(+). The enzyme catalyses a globoside GalGb4Cer (d18:1(4E)) + GDP-beta-L-fucose = a globoside Globo-H (d18:1(4E)) + GDP + H(+). It carries out the reaction a neolactoside nLc4Cer + GDP-beta-L-fucose = a neolactoside IV(2)-alpha-Fuc-nLc4Cer + GDP + H(+). It catalyses the reaction a neolactoside nLc4Cer(d18:1(4E)) + GDP-beta-L-fucose = a neolactoside IV(2)-alpha-Fuc-nLc4Cer(d18:1(4E)) + GDP + H(+). The catalysed reaction is a ganglioside GM1 + GDP-beta-L-fucose = a ganglioside Fuc-GM1 + GDP + H(+). The enzyme catalyses a ganglioside GA1 + GDP-beta-L-fucose = a ganglioside Fuc-GA1 + GDP + H(+). It carries out the reaction Lc4Cer + GDP-beta-L-fucose = alpha-L-fucosyl-(1-&gt;2)-beta-D-galactosyl-(1-&gt;3)-N-acetyl-beta-D-glucosaminyl-(1-&gt;3)-beta-D-galactosyl-(1-&gt;4)-beta-D-glucosyl-(1&lt;-&gt;1')-ceramide + GDP + H(+). It catalyses the reaction a beta-D-Gal-(1-&gt;3)-beta-D-GlcNAc-(1-&gt;3)-beta-D-Gal-(1-&gt;4)-beta-D-Glc-(1&lt;-&gt;1')-Cer(d18:1(4E)) + GDP-beta-L-fucose = alpha-L-fucosyl-(1-&gt;2)- beta-D-galactosyl-(1-&gt;3)-N-acetyl-beta-D-glucosaminyl-(1-&gt;3)-beta-D-galactosyl-(1-&gt;4)-beta-D-glucosyl-(1&lt;-&gt;1')-N-acylsphing-4-enine + GDP + H(+). The catalysed reaction is a ganglioside GD1b + GDP-beta-L-fucose = a ganglioside Fuc-GD1b + GDP + H(+). The enzyme catalyses a lactoside III(4)-a-Fuc-Lc4Cer + GDP-beta-L-fucose = a lactoside IV(2),III(4)-a-[Fuc]2-Lc4Cer + GDP + H(+). It carries out the reaction beta-D-galactosyl-(1-&gt;3)-N-acetyl-D-galactosamine + GDP-beta-L-fucose = alpha-L-fucosyl-(1-&gt;2)-beta-D-galactosyl-(1-&gt;3)-N-acetyl-D-galactosamine + GDP + H(+). It functions in the pathway protein modification; protein glycosylation. In terms of biological role, catalyzes the transfer of L-fucose, from a guanosine diphosphate-beta-L-fucose, to the terminal galactose on both O- and N-linked glycans chains of cell surface glycoproteins and glycolipids and the resulting epitope regulates several processes such as cell-cell interaction including host-microbe interaction, cell surface expression and cell proliferation. Preferentially fucosylates gangliosides GA1 and GM1 in the antrum, cecum and colon and in the female reproductive organs. Fucosylated host glycoproteins or glycolipids mediate interaction with intestinal microbiota influencing its composition. Creates a soluble precursor oligosaccharide FuC-alpha ((1,2)Galbeta-) called the H antigen which is an essential substrate for the final step in the soluble ABO blood group antigen synthesis pathway. This is Galactoside alpha-(1,2)-fucosyltransferase 2 from Rattus norvegicus (Rat).